The following is a 181-amino-acid chain: Immunity-related GTPase family M protein (181 aa).

Residues 32–181 (TPVNITMAGD…NLQKERVCEY (150 aa)) enclose the IRG-type G domain. Residues 41–48 (DSGNGMST), 66–70 (TELVK), and 147–149 (KLD) contribute to the GTP site.

This sequence belongs to the TRAFAC class dynamin-like GTPase superfamily. IRG family. As to quaternary structure, interacts with ULK1; promoting the coassembly of ULK1 and BECN1. Interacts with BECN1; enhancing BECN1-interacting partners and influencing the composition of the BECN1 complex. Interacts with ATG16L1. Interacts with NOD2; promoting IRGM 'Lys-63'-linked polyubiquitination, which is required for interactions with the core autophagy factors. Interacts with STX17; promoting STX17 recruitment to autophagosomes. Interacts with ATG8 proteins (GABARAP, GABARAPL1, GABARAPL2, MAP1LC3A, MAP1LC3B and MAP1LC3C); promoting STX17 recruitment to autophagosomes. Interacts with TFEB; promoting association between TFEB and PPP3CB and TFEB dephosphorylation. Interacts with PPP3CB; promoting association between TFEB and PPP3CB and TFEB dephosphorylation. Interacts with NLRP3; preventing NLRP3 inflammasome assembly and promoting SQSTM1/p62-dependent autophagic degradation of NLRP3. Interacts with CGAS; promoting SQSTM1/p62-dependent autophagic degradation of CGAS. Interacts with RIGI/RIG-I; promoting SQSTM1/p62-dependent autophagic degradation of RIGI/RIG-I. Interacts with NOD1; promoting SQSTM1/p62-dependent autophagic degradation of RIGI/RIG-I. Interacts with NOD2; promoting SQSTM1/p62-dependent autophagic degradation of RIGI/RIG-I. Interacts with RIPK2; promoting SQSTM1/p62-dependent autophagic degradation of RIGI/RIG-I. In terms of processing, ubiquitinated via 'Lys-63'-linked polyubiquitination in a NOD2-dependent process. 'Lys-63'-linked polyubiquitination is required for interactions with the core autophagy factors. In terms of tissue distribution, widely expressed (at protein level). Expressed in several tissues including colon, small bowel and peripheral blood leukocytes.

It localises to the golgi apparatus membrane. The protein resides in the cell membrane. It is found in the cytoplasmic vesicle. Its subcellular location is the phagosome membrane. The protein localises to the autophagosome membrane. It localises to the lysosome membrane. The protein resides in the late endosome membrane. It is found in the mitochondrion membrane. Its subcellular location is the cell projection. The protein localises to the phagocytic cup. It localises to the mitochondrion. The enzyme catalyses GTP + H2O = GDP + phosphate + H(+). Its function is as follows. Immunity-related GTPase that plays important roles in innate immunity and inflammatory response. Acts as a dynamin-like protein that binds to intracellular membranes and promotes remodeling and trafficking of those membranes. Required for clearance of acute protozoan and bacterial infections by interacting with autophagy and lysosome regulatory proteins, thereby promoting the fusion of phagosomes with lysosomes for efficient degradation of cargo including microbes. Regulates selective autophagy, including xenophagy and mitophagy, both directly and indirectly. Directly regulates autophagy by acting as a molecular adapter that promotes the coassembly of the core autophagy machinery to mediate antimicrobial defense: IRGM (1) activates AMPK, which in turn phosphorylates ULK1 and BECN1 to induce autophagy, (2) promotes the coassembly of ULK1 and BECN1, enhancing BECN1-interacting partners and (3) influences the composition of the BECN1 complex, by competing with the negative regulators BCL2 and RUBCN, to trigger autophagy. Also activates autophagy by promoting recruitment of STX17 to autophagosomes. In collaboration with ATG8 proteins, regulate lysosomal biogenesis, a fundamental process for any autophagic pathway, by promoting TFEB dephosphorylation. Also modulates autophagy by assisting with autophagosome formation and preventing lysosomal deacidification. While activating autophagy, acts as a key negative regulator of the inflammatory and interferon responses both by (1) promoting mitophagy and (2) mediating autophagy-dependent degradation of effectors of the inflammatory response. Promotes degradation of damaged and IFNG/IFN-gamma-stressed mitochondria via mitophagy, preventing cytosolic release of ligands that activate inflammation. Acts as a suppressor of inflammation by promoting recruitment of inflammation effectors, such as CGAS, RIGI/RIG-I and NLRP3, to autophagosome membranes, leading to their SQSTM1/p62-dependent autophagic degradation. Also directly inhibits assembly of the NLRP3 inflammasome by preventing the association between NLRP3 and PYCARD. Acts as a negative regulator of antiviral innate immune response by suppressing the RIPK2-dependent pro-inflammatory response: mediates recruitment of RIPosomes, composed of RIPK2 and NOD1 or NOD2, to autophagosome membranes, promoting their SQSTM1/p62-dependent autophagic degradation. In terms of biological role, acts as a positive regulator of mitophagy in response to intracellular mycobacteria infection: specifically binds cardiolipin, leading to its translocation to mitochondria, where it promotes affected mitochondrial fission and mitophagy. (Microbial infection) Following infection by hepatitis C virus (HCV), promotes HCV-triggered membrane remodeling, leading to autophagy and Golgi fragmentation, a step required for HCV replication. The sequence is that of Immunity-related GTPase family M protein from Homo sapiens (Human).